The following is a 117-amino-acid chain: Large ribosomal subunit protein bL20c (117 aa).

It belongs to the bacterial ribosomal protein bL20 family.

The protein localises to the plastid. The protein resides in the chloroplast. In terms of biological role, binds directly to 23S ribosomal RNA and is necessary for the in vitro assembly process of the 50S ribosomal subunit. It is not involved in the protein synthesizing functions of that subunit. The sequence is that of Large ribosomal subunit protein bL20c from Olimarabidopsis pumila (Dwarf rocket).